Here is a 794-residue protein sequence, read N- to C-terminus: E3 ubiquitin-protein ligase wwp-1 (794 aa).

Residues 1 to 16 (MARNEPSSQQPSSSGS) are compositionally biased toward low complexity. 2 disordered regions span residues 1-31 (MARN…KPSK) and 155-198 (RSAG…AAPT). In terms of domain architecture, C2 spans 10 to 124 (QPSSSGSNGT…TRNENGEFKN (115 aa)). The span at 17–27 (NGTPAQQNGSA) shows a compositional bias: polar residues. A compositionally biased stretch (low complexity) spans 161–186 (AETAASASSEASTSNGVATSSSARRP). WW domains are found at residues 219–252 (EQLP…RPST), 253–286 (QPLP…RPTA), 324–358 (GPLP…DPRT), and 366–399 (QPLP…DPRT). Positions 460-794 (NAVDLRRRLY…IEMTEGFGNE (335 aa)) constitute an HECT domain. The active-site Glycyl thioester intermediate is the Cys762.

Interacts (via WW domains) with Kruppel-like factor klf-1. Interacts with ubiquitin-conjugating enzyme E2 ubc-18. Expressed in neurons localized in the head and tail of adults.

It carries out the reaction S-ubiquitinyl-[E2 ubiquitin-conjugating enzyme]-L-cysteine + [acceptor protein]-L-lysine = [E2 ubiquitin-conjugating enzyme]-L-cysteine + N(6)-ubiquitinyl-[acceptor protein]-L-lysine.. The protein operates within protein modification; protein ubiquitination. E3 ubiquitin-protein ligase which accepts ubiquitin from an E2 ubiquitin-conjugating enzyme in the form of a thioester and then directly transfers the ubiquitin to targeted substrates. Ubiquitinates klf-1. Required for diet restriction-mediated lifespan extension, acting in concert with Kruppel-like factor klf-1 in the intestine to perhaps modulate genes involved in lipid metabolism. Probably acting downstream of the Insulin/IGF-1-like signaling (IIS) mediated pathway, plays a role in the immune response to infection by the Gram-negative bacterium P.aeruginosa, at least partly in response to bacterial pore-forming toxins. The chain is E3 ubiquitin-protein ligase wwp-1 from Caenorhabditis elegans.